The primary structure comprises 198 residues: Dual specificity protein phosphatase 13B (198 aa).

One can recognise a Tyrosine-protein phosphatase domain in the interval 45–193 (HIDEVWPSLF…LQVLDNRLGR (149 aa)). Cys138 acts as the Phosphocysteine intermediate in catalysis.

This sequence belongs to the protein-tyrosine phosphatase family. Non-receptor class dual specificity subfamily. Highly expressed in the testis (at protein level). Also found in the skeletal muscle.

It catalyses the reaction O-phospho-L-tyrosyl-[protein] + H2O = L-tyrosyl-[protein] + phosphate. It carries out the reaction O-phospho-L-seryl-[protein] + H2O = L-seryl-[protein] + phosphate. The catalysed reaction is O-phospho-L-threonyl-[protein] + H2O = L-threonyl-[protein] + phosphate. Its function is as follows. Dual specificity phosphatase that dephosphorylates MAPK8/JNK and MAPK14/p38, but not MAPK1/ERK2, in vitro. Exhibits intrinsic phosphatase activity towards both phospho-seryl/threonyl and -tyrosyl residues, with similar specific activities in vitro. The protein is Dual specificity protein phosphatase 13B of Homo sapiens (Human).